The following is a 679-amino-acid chain: Glycine--tRNA ligase beta subunit (679 aa).

This sequence belongs to the class-II aminoacyl-tRNA synthetase family. In terms of assembly, tetramer of two alpha and two beta subunits.

It localises to the cytoplasm. It catalyses the reaction tRNA(Gly) + glycine + ATP = glycyl-tRNA(Gly) + AMP + diphosphate. The protein is Glycine--tRNA ligase beta subunit of Streptococcus gordonii (strain Challis / ATCC 35105 / BCRC 15272 / CH1 / DL1 / V288).